A 1400-amino-acid polypeptide reads, in one-letter code: DNA-directed RNA polymerase subunit beta' (1400 aa).

Zn(2+) contacts are provided by cysteine 71, cysteine 73, cysteine 86, and cysteine 89. 3 residues coordinate Mg(2+): aspartate 462, aspartate 464, and aspartate 466. Positions 810, 884, 891, and 894 each coordinate Zn(2+).

This sequence belongs to the RNA polymerase beta' chain family. As to quaternary structure, the RNAP catalytic core consists of 2 alpha, 1 beta, 1 beta' and 1 omega subunit. When a sigma factor is associated with the core the holoenzyme is formed, which can initiate transcription. The cofactor is Mg(2+). Zn(2+) serves as cofactor.

It catalyses the reaction RNA(n) + a ribonucleoside 5'-triphosphate = RNA(n+1) + diphosphate. DNA-dependent RNA polymerase catalyzes the transcription of DNA into RNA using the four ribonucleoside triphosphates as substrates. This chain is DNA-directed RNA polymerase subunit beta', found in Rhodopseudomonas palustris (strain BisA53).